Reading from the N-terminus, the 255-residue chain is Ribonuclease HII (255 aa).

An RNase H type-2 domain is found at 72-255 (AIICGIDEVG…KSFEPIKSLL (184 aa)). Residues D78, E79, and D170 each contribute to the a divalent metal cation site.

This sequence belongs to the RNase HII family. The cofactor is Mn(2+). Requires Mg(2+) as cofactor.

It localises to the cytoplasm. It carries out the reaction Endonucleolytic cleavage to 5'-phosphomonoester.. In terms of biological role, endonuclease that specifically degrades the RNA of RNA-DNA hybrids. This is Ribonuclease HII from Staphylococcus aureus (strain MRSA252).